A 226-amino-acid chain; its full sequence is UPF0758 protein SAK_1186 (226 aa).

The MPN domain maps to 103 to 225 (QILSSEQLAR…YYSFREEADI (123 aa)). Residues His174, His176, and Asp187 each contribute to the Zn(2+) site. A JAMM motif motif is present at residues 174–187 (HNHPSGSPKPSESD).

Belongs to the UPF0758 family.

This is UPF0758 protein SAK_1186 from Streptococcus agalactiae serotype Ia (strain ATCC 27591 / A909 / CDC SS700).